The chain runs to 1857 residues: Phosphatidylinositol 3-kinase 2 (1857 aa).

Low complexity-rich tracts occupy residues 1–32 and 42–55; these read MKMSEGIISPLSLSSESSEQQQAAIRKFSNGS and NLSVNSSNSGSNNS. 5 disordered regions span residues 1-61, 145-313, 348-468, 481-512, and 530-573; these read MKMS…KSST, TPLN…TNRV, SSSK…NSIR, ISSNGIPSSPGQVSNKDYNNIGNLSNSSGERV, and ESDI…GPNV. Over residues 145–155 the composition is skewed to polar residues; it reads TPLNRSRSGSI. Over residues 162-269 the composition is skewed to low complexity; sequence NNLTSSSSSS…NNNNNNNSNS (108 aa). Over residues 270–281 the composition is skewed to polar residues; it reads GGSSRMITSKSQ. 2 stretches are compositionally biased toward low complexity: residues 288-311 and 352-464; these read TSNTAATTTTTTTTNTSAPTTPTN and LLIP…QPSN. The span at 533 to 560 shows a compositional bias: low complexity; it reads ISSSPRSIGSPNSIRASISSQLPPSLSS. Positions 561-570 are enriched in gly residues; that stretch reads IGGGGGGGSG. The PI3K-RBD domain occupies 821-934; that stretch reads PNKITIMVLL…NQTVELSLTN (114 aa). The disordered stretch occupies residues 996–1078; the sequence is KETNKENKDS…SGSGNGSEQP (83 aa). A compositionally biased stretch (basic and acidic residues) spans 997–1011; sequence ETNKENKDSNKENKD. Low complexity predominate over residues 1012-1056; that stretch reads SSSNNNNNNNNNNNNNNNNNNNNNNNNNNNGNNNGNNSNNNSNSN. The C2 PI3K-type domain occupies 1099 to 1271; it reads VKRLFRVNIA…QPIILLVEFE (173 aa). A PIK helical domain is found at 1326 to 1503; that stretch reads PVGLKKLDLD…GLLLEGYLRS (178 aa). The 278-residue stretch at 1568–1845 folds into the PI3K/PI4K catalytic domain; it reads IIDKCRYMDS…NISVALNTKT (278 aa). Residues 1574–1580 are G-loop; that stretch reads YMDSKKL. The segment at 1711–1719 is catalytic loop; the sequence is GIGDRHSDN. The segment at 1730–1756 is activation loop; that stretch reads HIDFGHFLGNYKKKYGFKRERAPFIFT.

The protein belongs to the PI3/PI4-kinase family.

The catalysed reaction is a 1,2-diacyl-sn-glycero-3-phospho-(1D-myo-inositol) + ATP = a 1,2-diacyl-sn-glycero-3-phospho-(1D-myo-inositol-3-phosphate) + ADP + H(+). In Dictyostelium discoideum (Social amoeba), this protein is Phosphatidylinositol 3-kinase 2 (pikB).